The sequence spans 276 residues: Mitochondrial outer membrane protein porin of 36 kDa (276 aa).

It belongs to the eukaryotic mitochondrial porin (TC 1.B.8.1) family.

Its subcellular location is the mitochondrion outer membrane. Its function is as follows. Forms a channel through the cell membrane that allows diffusion of small hydrophilic molecules. The channel adopts an open conformation at low or zero membrane potential and a closed conformation at potentials above 30-40 mV. The open state has a weak anion selectivity whereas the closed state is cation-selective. The chain is Mitochondrial outer membrane protein porin of 36 kDa from Solanum tuberosum (Potato).